Consider the following 142-residue polypeptide: Large ribosomal subunit protein uL11 (142 aa).

Belongs to the universal ribosomal protein uL11 family. Part of the ribosomal stalk of the 50S ribosomal subunit. Interacts with L10 and the large rRNA to form the base of the stalk. L10 forms an elongated spine to which L12 dimers bind in a sequential fashion forming a multimeric L10(L12)X complex. Post-translationally, one or more lysine residues are methylated.

Forms part of the ribosomal stalk which helps the ribosome interact with GTP-bound translation factors. The sequence is that of Large ribosomal subunit protein uL11 from Desulfitobacterium hafniense (strain DSM 10664 / DCB-2).